Consider the following 270-residue polypeptide: MADHMMAMNHGRFPDGTNGLHHHPAHRMGMGQFPSPHHHQQQQPQHAFNALMGEHIHYGAGNMNATSGIRHAMGPGTVNGGHPPSALAPAARFNNSQFMGPPVASQGGSLPASMQLQKLNNQYFNHHPYPHNHYMPDLHPAAGHQMNGTNQHFRDCNPKHSGGSSTPGGSGGSSTPGGSGSSSGGGAGSSNSGGGSGSGNMPASVAHVPAAMLPPNVIDTDFIDEEVLMSLVIEMGLDRIKELPELWLGQNEFDFMTDFVCKQQPSRVSC.

A disordered region spans residues 138-201; it reads LHPAAGHQMN…SGGGSGSGNM (64 aa). Over residues 165 to 198 the composition is skewed to gly residues; sequence STPGGSGGSSTPGGSGSSSGGGAGSSNSGGGSGS.

Belongs to the CITED family. As to quaternary structure, interacts (via C-terminus) with SMAD2. Interacts (via C-terminus) with SMAD3 (via MH2 domain). Interacts with LHX2 (via LIM domains). Interacts with WT1. Interacts (via C-terminus) with EP300 (via CH1 domain); the interaction is stimulated in response to hypoxia. Interacts with PPARA. Interacts (via C-terminus) with TFAP2A, TFAP2B and TFAP2C.

It localises to the nucleus. Transcriptional coactivator of the p300/CBP-mediated transcription complex. Acts as a bridge, linking TFAP2 transcription factors and the p300/CBP transcriptional coactivator complex in order to stimulate TFAP2-mediated transcriptional activation. Positively regulates TGF-beta signaling through its association with the SMAD/p300/CBP-mediated transcriptional coactivator complex. Stimulates the peroxisome proliferator-activated receptors PPARA transcriptional activity. Enhances estrogen-dependent transactivation mediated by estrogen receptors. Also acts as a transcriptional corepressor; interferes with the binding of the transcription factors HIF1A or STAT2 and the p300/CBP transcriptional coactivator complex. Participates in sex determination and early gonad development by stimulating transcription activation of SRY. Plays a role in controlling left-right patterning during embryogenesis; potentiates transcriptional activation of NODAL-mediated gene transcription in the left lateral plate mesoderm (LPM). Plays an essential role in differentiation of the adrenal cortex from the adrenogonadal primordium (AGP); stimulates WT1-mediated transcription activation thereby up-regulating the nuclear hormone receptor NR5A1 promoter activity. Associates with chromatin to the PITX2 P1 promoter region. In Homo sapiens (Human), this protein is Cbp/p300-interacting transactivator 2 (CITED2).